A 357-amino-acid chain; its full sequence is Holliday junction branch migration complex subunit RuvB (357 aa).

Low complexity predominate over residues 1-15; that stretch reads MAIQSDSLSSLPDSP. A disordered region spans residues 1 to 30; that stretch reads MAIQSDSLSSLPDSPRIVAPQPVSPNEESI. Residues 13–195 form a large ATPase domain (RuvB-L) region; it reads DSPRIVAPQP…FGIVSRLEFY (183 aa). Residues Leu-34, Arg-35, Gly-76, Lys-79, Thr-80, Thr-81, 142–144, Arg-185, Tyr-195, and Arg-232 contribute to the ATP site; that span reads EDF. A Mg(2+)-binding site is contributed by Thr-80. A small ATPAse domain (RuvB-S) region spans residues 196 to 266; that stretch reads NTDELARIVT…AAGRALAMLD (71 aa). Residues 269-357 are head domain (RuvB-H); that stretch reads PQGLDVMDRK…SGGTGELFSK (89 aa). DNA is bound by residues Arg-305, Arg-324, and Arg-329.

Belongs to the RuvB family. As to quaternary structure, homohexamer. Forms an RuvA(8)-RuvB(12)-Holliday junction (HJ) complex. HJ DNA is sandwiched between 2 RuvA tetramers; dsDNA enters through RuvA and exits via RuvB. An RuvB hexamer assembles on each DNA strand where it exits the tetramer. Each RuvB hexamer is contacted by two RuvA subunits (via domain III) on 2 adjacent RuvB subunits; this complex drives branch migration. In the full resolvosome a probable DNA-RuvA(4)-RuvB(12)-RuvC(2) complex forms which resolves the HJ.

Its subcellular location is the cytoplasm. It catalyses the reaction ATP + H2O = ADP + phosphate + H(+). The RuvA-RuvB-RuvC complex processes Holliday junction (HJ) DNA during genetic recombination and DNA repair, while the RuvA-RuvB complex plays an important role in the rescue of blocked DNA replication forks via replication fork reversal (RFR). RuvA specifically binds to HJ cruciform DNA, conferring on it an open structure. The RuvB hexamer acts as an ATP-dependent pump, pulling dsDNA into and through the RuvAB complex. RuvB forms 2 homohexamers on either side of HJ DNA bound by 1 or 2 RuvA tetramers; 4 subunits per hexamer contact DNA at a time. Coordinated motions by a converter formed by DNA-disengaged RuvB subunits stimulates ATP hydrolysis and nucleotide exchange. Immobilization of the converter enables RuvB to convert the ATP-contained energy into a lever motion, pulling 2 nucleotides of DNA out of the RuvA tetramer per ATP hydrolyzed, thus driving DNA branch migration. The RuvB motors rotate together with the DNA substrate, which together with the progressing nucleotide cycle form the mechanistic basis for DNA recombination by continuous HJ branch migration. Branch migration allows RuvC to scan DNA until it finds its consensus sequence, where it cleaves and resolves cruciform DNA. This is Holliday junction branch migration complex subunit RuvB from Bordetella bronchiseptica (strain ATCC BAA-588 / NCTC 13252 / RB50) (Alcaligenes bronchisepticus).